Here is a 336-residue protein sequence, read N- to C-terminus: uncharacterized protein (336 aa).

This is an uncharacterized protein from Enterobacteria phage T4 (Bacteriophage T4).